The chain runs to 453 residues: Divalent metal cation transporter MntH (453 aa).

11 consecutive transmembrane segments (helical) span residues 39–59 (LAFL…GNWI), 66–86 (AQYG…AMLL), 114–134 (AIMF…AEVI), 146–166 (IPLI…LFIM), 175–195 (AIVG…VYIS), 217–237 (GILY…NLYL), 270–290 (LSIA…LFFG), 310–330 (PALG…ALLA), 362–382 (LITR…FKGN), 388–408 (QLLV…LIPL), and 427–447 (INII…YLII).

The protein belongs to the NRAMP family.

It is found in the cell membrane. Functionally, h(+)-stimulated, divalent metal cation uptake system. This is Divalent metal cation transporter MntH from Staphylococcus epidermidis (strain ATCC 12228 / FDA PCI 1200).